A 347-amino-acid polypeptide reads, in one-letter code: Methylthioribose-1-phosphate isomerase (347 aa).

Substrate contacts are provided by residues 47 to 49 (RGA), R90, and Q199. Catalysis depends on D240, which acts as the Proton donor. Residue 250-251 (NK) participates in substrate binding.

The protein belongs to the eIF-2B alpha/beta/delta subunits family. MtnA subfamily.

It catalyses the reaction 5-(methylsulfanyl)-alpha-D-ribose 1-phosphate = 5-(methylsulfanyl)-D-ribulose 1-phosphate. It participates in amino-acid biosynthesis; L-methionine biosynthesis via salvage pathway; L-methionine from S-methyl-5-thio-alpha-D-ribose 1-phosphate: step 1/6. Catalyzes the interconversion of methylthioribose-1-phosphate (MTR-1-P) into methylthioribulose-1-phosphate (MTRu-1-P). The sequence is that of Methylthioribose-1-phosphate isomerase from Natranaerobius thermophilus (strain ATCC BAA-1301 / DSM 18059 / JW/NM-WN-LF).